A 291-amino-acid chain; its full sequence is FFTIFLDLNMFLALGVNCWIDNTRVVYNRSSGRMSNAPCVQIRVPGFGKTYSVEYLDDNKLAGYMHTLVQNLVNNGYVRDETVLAAPYDWRLEPSQQEEYYQKLAGLVEEMHAAYGKPVFLIGHSVGCLHVLYFNQGIPIMSSIKLREEQRITTTSPWMFPARRVWPEDHVFISTPNFNYTGQDFKRFFEDLYFEEGWYMWLQSRDLLAGLPAPGVEVYCLYGVGLPTPSTYIYDHSFPYKDPVAALYEDGDDTVATRSTELCGQVQGSQSQPVHWLPMNWTEQLNMLFSN.

N28 carries N-linked (GlcNAc...) asparagine glycosylation. S125 serves as the catalytic Nucleophile. N179 carries N-linked (GlcNAc...) asparagine glycosylation. The cysteines at positions 220 and 263 are disulfide-linked. D252 serves as the catalytic Charge relay system. N280 carries N-linked (GlcNAc...) asparagine glycosylation.

Belongs to the AB hydrolase superfamily. Lipase family.

Its subcellular location is the secreted. The enzyme catalyses a sterol + a 1,2-diacyl-sn-glycero-3-phosphocholine = a sterol ester + a 1-acyl-sn-glycero-3-phosphocholine. With respect to regulation, APOA1 is the most potent activator in plasma. Also activated by APOE, APOC1 and APOA4. Central enzyme in the extracellular metabolism of plasma lipoproteins. Synthesized mainly in the liver and secreted into plasma where it converts cholesterol and phosphatidylcholines (lecithins) to cholesteryl esters and lysophosphatidylcholines on the surface of high and low density lipoproteins (HDLs and LDLs). The cholesterol ester is then transported back to the liver. Has a preference for plasma 16:0-18:2 or 18:O-18:2 phosphatidylcholines. Also produced in the brain by primary astrocytes, and esterifies free cholesterol on nascent APOE-containing lipoproteins secreted from glia and influences cerebral spinal fluid (CSF) APOE- and APOA1 levels. Together with APOE and the cholesterol transporter ABCA1, plays a key role in the maturation of glial-derived, nascent lipoproteins. Required for remodeling high-density lipoprotein particles into their spherical forms. This Myodes glareolus (Bank vole) protein is Phosphatidylcholine-sterol acyltransferase (LCAT).